The chain runs to 438 residues: UDP-N-acetylmuramoylalanine--D-glutamate ligase (438 aa).

112–118 (GSNGKST) contacts ATP.

Belongs to the MurCDEF family.

The protein resides in the cytoplasm. The catalysed reaction is UDP-N-acetyl-alpha-D-muramoyl-L-alanine + D-glutamate + ATP = UDP-N-acetyl-alpha-D-muramoyl-L-alanyl-D-glutamate + ADP + phosphate + H(+). Its pathway is cell wall biogenesis; peptidoglycan biosynthesis. In terms of biological role, cell wall formation. Catalyzes the addition of glutamate to the nucleotide precursor UDP-N-acetylmuramoyl-L-alanine (UMA). The polypeptide is UDP-N-acetylmuramoylalanine--D-glutamate ligase (Shigella sonnei (strain Ss046)).